The following is a 213-amino-acid chain: Thiamine-phosphate synthase (213 aa).

4-amino-2-methyl-5-(diphosphooxymethyl)pyrimidine-binding positions include 38–42 and Asn73; that span reads QLREK. Mg(2+) contacts are provided by Asp74 and Asp93. Position 111 (Ser111) interacts with 4-amino-2-methyl-5-(diphosphooxymethyl)pyrimidine. 2-[(2R,5Z)-2-carboxy-4-methylthiazol-5(2H)-ylidene]ethyl phosphate is bound at residue 137 to 139; the sequence is TTS. Lys140 lines the 4-amino-2-methyl-5-(diphosphooxymethyl)pyrimidine pocket. 2-[(2R,5Z)-2-carboxy-4-methylthiazol-5(2H)-ylidene]ethyl phosphate is bound by residues Gly169 and 189-190; that span reads IS.

It belongs to the thiamine-phosphate synthase family. Mg(2+) is required as a cofactor.

It carries out the reaction 2-[(2R,5Z)-2-carboxy-4-methylthiazol-5(2H)-ylidene]ethyl phosphate + 4-amino-2-methyl-5-(diphosphooxymethyl)pyrimidine + 2 H(+) = thiamine phosphate + CO2 + diphosphate. The catalysed reaction is 2-(2-carboxy-4-methylthiazol-5-yl)ethyl phosphate + 4-amino-2-methyl-5-(diphosphooxymethyl)pyrimidine + 2 H(+) = thiamine phosphate + CO2 + diphosphate. The enzyme catalyses 4-methyl-5-(2-phosphooxyethyl)-thiazole + 4-amino-2-methyl-5-(diphosphooxymethyl)pyrimidine + H(+) = thiamine phosphate + diphosphate. Its pathway is cofactor biosynthesis; thiamine diphosphate biosynthesis; thiamine phosphate from 4-amino-2-methyl-5-diphosphomethylpyrimidine and 4-methyl-5-(2-phosphoethyl)-thiazole: step 1/1. In terms of biological role, condenses 4-methyl-5-(beta-hydroxyethyl)thiazole monophosphate (THZ-P) and 2-methyl-4-amino-5-hydroxymethyl pyrimidine pyrophosphate (HMP-PP) to form thiamine monophosphate (TMP). The sequence is that of Thiamine-phosphate synthase from Lysinibacillus sphaericus (strain C3-41).